A 504-amino-acid chain; its full sequence is 2-isopropylmalate synthase (504 aa).

The region spanning 6–267 is the Pyruvate carboxyltransferase domain; that stretch reads IIIFDTTLRD…YTGIISKEIY (262 aa). Positions 15, 201, 203, and 237 each coordinate Mn(2+). Positions 391 to 504 are regulatory domain; it reads EITDLLQSSG…LNSYLRIHKN (114 aa).

Belongs to the alpha-IPM synthase/homocitrate synthase family. LeuA type 1 subfamily. Homodimer. Mn(2+) is required as a cofactor.

The protein localises to the cytoplasm. It catalyses the reaction 3-methyl-2-oxobutanoate + acetyl-CoA + H2O = (2S)-2-isopropylmalate + CoA + H(+). It participates in amino-acid biosynthesis; L-leucine biosynthesis; L-leucine from 3-methyl-2-oxobutanoate: step 1/4. Catalyzes the condensation of the acetyl group of acetyl-CoA with 3-methyl-2-oxobutanoate (2-ketoisovalerate) to form 3-carboxy-3-hydroxy-4-methylpentanoate (2-isopropylmalate). The chain is 2-isopropylmalate synthase from Campylobacter concisus (strain 13826).